The chain runs to 662 residues: DNA ligase (662 aa).

NAD(+)-binding positions include 34 to 38 (DYEYD), 83 to 84 (SI), and E113. The active-site N6-AMP-lysine intermediate is K115. NAD(+)-binding residues include R136, E172, K286, and K310. C404, C407, C422, and C427 together coordinate Zn(2+). Positions 583–662 (KSGSTCFGKA…EAFTNLIHLE (80 aa)) constitute a BRCT domain.

This sequence belongs to the NAD-dependent DNA ligase family. LigA subfamily. Requires Mg(2+) as cofactor. It depends on Mn(2+) as a cofactor.

The enzyme catalyses NAD(+) + (deoxyribonucleotide)n-3'-hydroxyl + 5'-phospho-(deoxyribonucleotide)m = (deoxyribonucleotide)n+m + AMP + beta-nicotinamide D-nucleotide.. DNA ligase that catalyzes the formation of phosphodiester linkages between 5'-phosphoryl and 3'-hydroxyl groups in double-stranded DNA using NAD as a coenzyme and as the energy source for the reaction. It is essential for DNA replication and repair of damaged DNA. The sequence is that of DNA ligase from Chlamydia pneumoniae (Chlamydophila pneumoniae).